Reading from the N-terminus, the 540-residue chain is Zona pellucida sperm-binding protein 4 (540 aa).

Residues 1–24 (MAPGSTMWLLGYIFLCFPVSFALI) form the signal peptide. At 25-515 (KQPKPETPTD…SGVPVHPGAL (491 aa)) the chain is on the extracellular side. N-linked (GlcNAc...) asparagine glycosylation is found at Asn-76 and Asn-97. Positions 145–187 (GLCDSVPVQDRLPCATAPISQEDCEELGCCHSSEEVNACYYGN) constitute a P-type domain. The ZP domain maps to 192–470 (HCTQEGHFSI…VTCPIDSRRR (279 aa)). N-linked (GlcNAc...) asparagine glycosylation is found at Asn-206 and Asn-223. Ser-296 carries an O-linked (GalNAc...) serine glycan. A glycan (O-linked (GalNAc...) threonine) is linked at Thr-306. Cys-371 and Cys-446 are disulfide-bonded. The propeptide at 467–540 (SRRRNSDINF…VSYVAIRTRR (74 aa)) is removed in mature form. Residues Asn-478 and Asn-482 are each glycosylated (N-linked (GlcNAc...) asparagine). The helical transmembrane segment at 516-536 (WVAGLSGIFIIGALLVSYVAI) threads the bilayer. Over 537–540 (RTRR) the chain is Cytoplasmic.

Belongs to the ZP domain family. ZPB subfamily. Proteolytically cleaved before the transmembrane segment to yield the secreted ectodomain incorporated in the zona pellucida. Expressed in oocytes (at protein level).

Its subcellular location is the zona pellucida. It is found in the cell membrane. Functionally, component of the zona pellucida, an extracellular matrix surrounding oocytes which mediates sperm binding, induction of the acrosome reaction and prevents post-fertilization polyspermy. The zona pellucida is composed of 3 to 4 glycoproteins, ZP1, ZP2, ZP3, and ZP4. ZP4 may act as a sperm receptor. This is Zona pellucida sperm-binding protein 4 (ZP4) from Oryctolagus cuniculus (Rabbit).